Reading from the N-terminus, the 124-residue chain is Small ribosomal subunit protein bS6 (124 aa).

The protein belongs to the bacterial ribosomal protein bS6 family.

Binds together with bS18 to 16S ribosomal RNA. In Actinobacillus pleuropneumoniae serotype 7 (strain AP76), this protein is Small ribosomal subunit protein bS6.